The chain runs to 403 residues: Protein-export membrane protein SecD (403 aa).

6 helical membrane-spanning segments follow: residues 14-34, 238-258, 265-285, 294-314, 336-356, and 365-385; these read VILL…MGIQ, FAEG…VILI, ILVL…LGAA, LAAI…QIII, FFII…LAYI, and IGLL…GVFI.

The protein belongs to the SecD/SecF family. SecD subfamily. In terms of assembly, part of the protein translocation apparatus. Forms a complex with SecF.

It is found in the cell membrane. Functionally, involved in protein export. The sequence is that of Protein-export membrane protein SecD from Methanothermobacter thermautotrophicus (strain ATCC 29096 / DSM 1053 / JCM 10044 / NBRC 100330 / Delta H) (Methanobacterium thermoautotrophicum).